Here is a 180-residue protein sequence, read N- to C-terminus: NADH-quinone oxidoreductase subunit B (180 aa).

Cysteine 59, cysteine 60, cysteine 124, and cysteine 154 together coordinate [4Fe-4S] cluster.

This sequence belongs to the complex I 20 kDa subunit family. NDH-1 is composed of 14 different subunits. Subunits NuoB, C, D, E, F, and G constitute the peripheral sector of the complex. It depends on [4Fe-4S] cluster as a cofactor.

It is found in the cell inner membrane. The catalysed reaction is a quinone + NADH + 5 H(+)(in) = a quinol + NAD(+) + 4 H(+)(out). NDH-1 shuttles electrons from NADH, via FMN and iron-sulfur (Fe-S) centers, to quinones in the respiratory chain. The immediate electron acceptor for the enzyme in this species is believed to be ubiquinone. Couples the redox reaction to proton translocation (for every two electrons transferred, four hydrogen ions are translocated across the cytoplasmic membrane), and thus conserves the redox energy in a proton gradient. The sequence is that of NADH-quinone oxidoreductase subunit B from Beijerinckia indica subsp. indica (strain ATCC 9039 / DSM 1715 / NCIMB 8712).